Here is a 269-residue protein sequence, read N- to C-terminus: Glucosyl-3-phosphoglycerate/mannosyl-3-phosphoglycerate phosphatase (269 aa).

Asp6 (nucleophile) is an active-site residue. Residues Asp6, Asp8, and Asp210 each coordinate Mg(2+).

The protein belongs to the HAD-like hydrolase superfamily. MPGP family. In terms of assembly, monomer. Requires Co(2+) as cofactor. Mg(2+) is required as a cofactor.

The enzyme catalyses (2R)-2-O-(alpha-D-glucopyranosyl)-3-phospho-glycerate + H2O = (2R)-2-O-(alpha-D-glucopyranosyl)-glycerate + phosphate. The catalysed reaction is 2-O-(alpha-D-mannosyl)-3-phosphoglycerate + H2O = (2R)-2-O-(alpha-D-mannosyl)-glycerate + phosphate. Functionally, involved in the biosynthesis of glucosylglycerate. Catalyzes the dephosphorylation of glucosyl-3-phosphoglycerate (GPG) and mannosyl-3-phosphoglycerate (MPG) to glucosylglycerate (GG) and mannosylglycerate (MG), respectively. This is Glucosyl-3-phosphoglycerate/mannosyl-3-phosphoglycerate phosphatase from Persephonella marina (strain DSM 14350 / EX-H1).